A 428-amino-acid polypeptide reads, in one-letter code: uncharacterized protein (428 aa).

Transmembrane regions (helical) follow at residues 26–46, 51–71, 90–110, 135–155, 177–197, 223–243, 278–298, 314–334, 359–379, and 407–427; these read VALTCAAIMVGAGIVGSDDVF, AGIDWDVIFLLLGMMIIVSVL, AAPLRIMILLVLVTALGSALL, TPFLVAEVFASNVGGAATLVG, MAPAVLVVMIALIGLLPWLLG, LLIKCGVVLVLVFAAFIAHPV, TLLFFAGLFVMVGALVKTGVV, LLTVGLILGISAPVSGIIDNI, TFWWALALSADFGGNLTAVAA, and VVTAVSLVLSAVYLWLRYFVF.

The protein belongs to the CitM (TC 2.A.11) transporter family.

It localises to the cell membrane. This is an uncharacterized protein from Mycobacterium tuberculosis (strain CDC 1551 / Oshkosh).